Here is a 341-residue protein sequence, read N- to C-terminus: NADH-quinone oxidoreductase subunit H 1 (341 aa).

8 helical membrane-spanning segments follow: residues 13-33 (LVVI…IAYI), 82-102 (GLFL…WAVI), 115-135 (VGVL…IMAG), 161-181 (IGFV…TAIV), 190-210 (MLGW…VSAL), 248-268 (YVAI…GWLP), 277-297 (WVPG…LFAM), and 313-333 (LGWK…ASVL).

Belongs to the complex I subunit 1 family. NDH-1 is composed of 14 different subunits. Subunits NuoA, H, J, K, L, M, N constitute the membrane sector of the complex.

It is found in the cell inner membrane. The catalysed reaction is a quinone + NADH + 5 H(+)(in) = a quinol + NAD(+) + 4 H(+)(out). Its function is as follows. NDH-1 shuttles electrons from NADH, via FMN and iron-sulfur (Fe-S) centers, to quinones in the respiratory chain. The immediate electron acceptor for the enzyme in this species is believed to be ubiquinone. Couples the redox reaction to proton translocation (for every two electrons transferred, four hydrogen ions are translocated across the cytoplasmic membrane), and thus conserves the redox energy in a proton gradient. This subunit may bind ubiquinone. In Rhodopseudomonas palustris (strain ATCC BAA-98 / CGA009), this protein is NADH-quinone oxidoreductase subunit H 1.